Reading from the N-terminus, the 428-residue chain is Cytochrome c biogenesis protein CcsB (428 aa).

3 helical membrane passes run 14 to 34, 72 to 92, and 162 to 182; these read LRFAISLIIFIAIASGIGTFI, SFWFLFTLILLCISLAACSFR, and IGPLVVHIGLIVLLIGSAYGS.

This sequence belongs to the Ccs1/CcsB family. As to quaternary structure, may interact with CcsA.

Its subcellular location is the cellular thylakoid membrane. Functionally, required during biogenesis of c-type cytochromes (cytochrome c6 and cytochrome f) at the step of heme attachment. The chain is Cytochrome c biogenesis protein CcsB from Prochlorococcus marinus (strain AS9601).